Reading from the N-terminus, the 61-residue chain is Small ribosomal subunit protein uS14 (61 aa).

Residues Cys-24, Cys-27, Cys-40, and Cys-43 each contribute to the Zn(2+) site.

This sequence belongs to the universal ribosomal protein uS14 family. Zinc-binding uS14 subfamily. In terms of assembly, part of the 30S ribosomal subunit. Contacts proteins S3 and S10. Requires Zn(2+) as cofactor.

In terms of biological role, binds 16S rRNA, required for the assembly of 30S particles and may also be responsible for determining the conformation of the 16S rRNA at the A site. The polypeptide is Small ribosomal subunit protein uS14 (Caldanaerobacter subterraneus subsp. tengcongensis (strain DSM 15242 / JCM 11007 / NBRC 100824 / MB4) (Thermoanaerobacter tengcongensis)).